The primary structure comprises 160 residues: Cytochrome c-type biogenesis protein CcmE (160 aa).

Residues M1–R7 are Cytoplasmic-facing. Residues L8–A28 traverse the membrane as a helical; Signal-anchor for type II membrane protein segment. Residues L29–R160 are Periplasmic-facing. Heme contacts are provided by H122 and Y126. Residues V140–R160 are disordered.

The protein belongs to the CcmE/CycJ family.

It localises to the cell inner membrane. Functionally, heme chaperone required for the biogenesis of c-type cytochromes. Transiently binds heme delivered by CcmC and transfers the heme to apo-cytochromes in a process facilitated by CcmF and CcmH. This chain is Cytochrome c-type biogenesis protein CcmE, found in Beijerinckia indica subsp. indica (strain ATCC 9039 / DSM 1715 / NCIMB 8712).